The sequence spans 252 residues: 2-succinyl-6-hydroxy-2,4-cyclohexadiene-1-carboxylate synthase (252 aa).

Belongs to the AB hydrolase superfamily. MenH family. Monomer.

The catalysed reaction is 5-enolpyruvoyl-6-hydroxy-2-succinyl-cyclohex-3-ene-1-carboxylate = (1R,6R)-6-hydroxy-2-succinyl-cyclohexa-2,4-diene-1-carboxylate + pyruvate. Its pathway is quinol/quinone metabolism; 1,4-dihydroxy-2-naphthoate biosynthesis; 1,4-dihydroxy-2-naphthoate from chorismate: step 3/7. It functions in the pathway quinol/quinone metabolism; menaquinone biosynthesis. Catalyzes a proton abstraction reaction that results in 2,5-elimination of pyruvate from 2-succinyl-5-enolpyruvyl-6-hydroxy-3-cyclohexene-1-carboxylate (SEPHCHC) and the formation of 2-succinyl-6-hydroxy-2,4-cyclohexadiene-1-carboxylate (SHCHC). The sequence is that of 2-succinyl-6-hydroxy-2,4-cyclohexadiene-1-carboxylate synthase from Salmonella choleraesuis (strain SC-B67).